Consider the following 176-residue polypeptide: Sigma intracellular receptor 2 (176 aa).

Residues 1-9 (MGAPATRRC) are Cytoplasmic-facing. The helical transmembrane segment at 10 to 30 (VEWLLGLYFLSHIPITLFMDL) threads the bilayer. Residues 10 to 158 (VEWLLGLYFL…PYLLIPFILL (149 aa)) form the EXPERA domain. At 31-68 (QAVLPRELYPVEFRNLLKWYAKEFKDPLLQEPPAWFKS) the chain is on the lumenal side. The helical transmembrane segment at 69–89 (FLFCELVFQLPFFPIATYAFL) threads the bilayer. Residues Val-75 and Gln-77 each coordinate cholesterol. Over 90–99 (KGSCKWIRTP) the chain is Cytoplasmic. The chain crosses the membrane as a helical span at residues 100–120 (AIIYSVHTMTTLIPILSTFLF). Positions 108-176 (MTTLIPILST…YKYEEKRKKK (69 aa)) are required for interaction with Hst1/HTN1. The Lumenal portion of the chain corresponds to 121–140 (EDFSKASGFKGQRPETLHER). Residues 141–161 (LTLVSVYAPYLLIPFILLIFM) form a helical membrane-spanning segment. Residues 162-176 (LRSPYYKYEEKRKKK) lie on the Cytoplasmic side of the membrane. The ER retention motif motif lies at 172-176 (KRKKK).

Belongs to the TMEM97/sigma-2 receptor family. In terms of assembly, homodimer. Interacts with NPC1; the interaction impairs NPC1-mediated cholesterol transport. Interacts with PGRMC1 and LDLR; the interaction increases LDL internalization. Interacts with histatin 1/HTN1; the interaction induces HTN1-stimulating wound healing. Interacts with TSPO. Forms a complex with TSPO and PGRMC1; the interaction occurs in MIA PaCa-2 cells but not in MCF7 cells. Widely expressed in normal tissues. Expressed in pancreatic, renal, breast, colon, ovarian surface epithelial (OSE) cells. Highly expressed in various proliferating cancer cells.

The protein localises to the rough endoplasmic reticulum membrane. It is found in the nucleus membrane. Sigma-2 receptor which contributes to ameliorate dysfunctional cellular processes and slow degenerative progression by regulating cell functions including cholesterol biosynthesis/trafficking, membrane trafficking, autophagy, lipid membrane-bound protein trafficking, and receptor stabilization at the cell surface. Forms a ternary complex with PGRMC1 receptor and low density lipoprotein receptor/LDLR at the plasma membrane, which increases LDLR-mediated LDL cholesterol internalization. Decreases lysosomal sterol transporter NPC1 availability to the cell, probably through NPC1-binding, hence controlling lipid transport, including cholesterol and LBPA, outside of late endosome/lysosome. Binds regio- and stereoselective ligand 20(S)-hydroxycholesterol (20(S)-OHC) which enhances TMEM97-NPC1 interaction and decreases TMEM97-PGRMC1 and TMEM97-TSPO interactions, thereby linking OHC binding to cholesterol homeostasis. Also able to bind cholesterol. Binds histatin 1 (Hst 1)/HN1 salivary peptide at the ER membrane, which is critical for increasing mitochondria-ER contacts and stimulating Hst1 wound healing properties. May alter the activity of some cytochrome P450 proteins. Although shows homologies with sterol isomerases (EXPERA domain), not able to catalyze sterol isomerization. However, may act as sensors of these molecules. Acts as a quality control factor in the ER, promoting the proteolytic degradation of nonproductive and extramitochondrial precursor proteins in the ER membrane thus removing them from the ER surface. This is Sigma intracellular receptor 2 from Homo sapiens (Human).